We begin with the raw amino-acid sequence, 603 residues long: NADH-ubiquinone oxidoreductase chain 5 (603 aa).

The next 16 helical transmembrane spans lie at 4-24, 38-58, 89-109, 122-142, 171-191, 211-233, 241-261, 273-293, 301-320, 325-347, 366-386, 405-424, 457-477, 488-508, 524-544, and 582-602; these read FTTMTALTLTSLIPPITATLI, TAIASAFTISLIPTTMFICLG, FLPVALLITWSIMEFSLWYMA, LIFLITMIILVTANNLLQLFI, AILYNRIGDIGFILALAWFLL, LPLLGLLLAAAGKSAQLGLHPWL, TPVSALLHSSTMVVAGVFLLI, IQTLTLCLGAITTLFAAICAL, IVAFSTSSQLGLMMVTIGIN, ALLHICTHAFFKALLFMCSGSII, MPLTSTSLTISSLALAGMPFL, NTWALSITLIATSLTGAYST, LMLGSLFAGFLITNNIPPMSL, LAALAATLLGLLVALDLNYLA, IMLGFYPSIIHRMIPHLSLLM, and GLIKLYFLSFLIPLLLILLMI.

It belongs to the complex I subunit 5 family. In terms of assembly, core subunit of respiratory chain NADH dehydrogenase (Complex I) which is composed of 45 different subunits.

Its subcellular location is the mitochondrion inner membrane. The catalysed reaction is a ubiquinone + NADH + 5 H(+)(in) = a ubiquinol + NAD(+) + 4 H(+)(out). Functionally, core subunit of the mitochondrial membrane respiratory chain NADH dehydrogenase (Complex I) which catalyzes electron transfer from NADH through the respiratory chain, using ubiquinone as an electron acceptor. Essential for the catalytic activity and assembly of complex I. This Pongo abelii (Sumatran orangutan) protein is NADH-ubiquinone oxidoreductase chain 5 (MT-ND5).